The following is a 217-amino-acid chain: Protein LURP-one-related 2 (217 aa).

It belongs to the LOR family.

Its function is as follows. Might be related to the phospholipid scramblase and tubby-like superfamily of membrane tethered transcription factors. The sequence is that of Protein LURP-one-related 2 from Arabidopsis thaliana (Mouse-ear cress).